The sequence spans 186 residues: Interferon beta-2 (186 aa).

An N-terminal signal peptide occupies residues 1 to 21 (MTHRCLLQMVLLLCFSTTALS). Cysteine 52 and cysteine 161 are joined by a disulfide. Asparagine 131 and asparagine 173 each carry an N-linked (GlcNAc...) asparagine glycan.

Belongs to the alpha/beta interferon family. Monomer.

The protein localises to the secreted. Has antiviral, antibacterial and anticancer activities. The sequence is that of Interferon beta-2 (IFNB2) from Bos taurus (Bovine).